The sequence spans 295 residues: UDP-N-acetylenolpyruvoylglucosamine reductase (295 aa).

Residues 24-188 (KVGGDAEIFF…LKAVFKVNKG (165 aa)) enclose the FAD-binding PCMH-type domain. The active site involves R168. The Proton donor role is filled by S217. E287 is an active-site residue.

The protein belongs to the MurB family. FAD is required as a cofactor.

The protein localises to the cytoplasm. It catalyses the reaction UDP-N-acetyl-alpha-D-muramate + NADP(+) = UDP-N-acetyl-3-O-(1-carboxyvinyl)-alpha-D-glucosamine + NADPH + H(+). It functions in the pathway cell wall biogenesis; peptidoglycan biosynthesis. In terms of biological role, cell wall formation. In Rickettsia akari (strain Hartford), this protein is UDP-N-acetylenolpyruvoylglucosamine reductase.